Reading from the N-terminus, the 338-residue chain is Lipoyl synthase (338 aa).

The segment at Met-1–Ala-22 is disordered. Residues Cys-84, Cys-89, Cys-95, Cys-110, Cys-114, Cys-117, and Ser-324 each coordinate [4Fe-4S] cluster. Residues Phe-96–Lys-313 enclose the Radical SAM core domain.

Belongs to the radical SAM superfamily. Lipoyl synthase family. The cofactor is [4Fe-4S] cluster.

The protein resides in the cytoplasm. It carries out the reaction [[Fe-S] cluster scaffold protein carrying a second [4Fe-4S](2+) cluster] + N(6)-octanoyl-L-lysyl-[protein] + 2 oxidized [2Fe-2S]-[ferredoxin] + 2 S-adenosyl-L-methionine + 4 H(+) = [[Fe-S] cluster scaffold protein] + N(6)-[(R)-dihydrolipoyl]-L-lysyl-[protein] + 4 Fe(3+) + 2 hydrogen sulfide + 2 5'-deoxyadenosine + 2 L-methionine + 2 reduced [2Fe-2S]-[ferredoxin]. It participates in protein modification; protein lipoylation via endogenous pathway; protein N(6)-(lipoyl)lysine from octanoyl-[acyl-carrier-protein]: step 2/2. Its function is as follows. Catalyzes the radical-mediated insertion of two sulfur atoms into the C-6 and C-8 positions of the octanoyl moiety bound to the lipoyl domains of lipoate-dependent enzymes, thereby converting the octanoylated domains into lipoylated derivatives. This is Lipoyl synthase from Pseudomonas entomophila (strain L48).